A 757-amino-acid polypeptide reads, in one-letter code: Xaa-Pro dipeptidyl-peptidase (757 aa).

Catalysis depends on charge relay system residues S348, D468, and H498.

Belongs to the peptidase S15 family. As to quaternary structure, homodimer.

Its subcellular location is the cytoplasm. The enzyme catalyses Hydrolyzes Xaa-Pro-|- bonds to release unblocked, N-terminal dipeptides from substrates including Ala-Pro-|-p-nitroanilide and (sequentially) Tyr-Pro-|-Phe-Pro-|-Gly-Pro-|-Ile.. Functionally, removes N-terminal dipeptides sequentially from polypeptides having unsubstituted N-termini provided that the penultimate residue is proline. The polypeptide is Xaa-Pro dipeptidyl-peptidase (Streptococcus pneumoniae (strain P1031)).